We begin with the raw amino-acid sequence, 266 residues long: Translation initiation factor 2 subunit alpha (266 aa).

Residues 12–83 (GEILIATVKQ…RKGTVDVSLK (72 aa)) form the S1 motif domain.

This sequence belongs to the eIF-2-alpha family. In terms of assembly, heterotrimer composed of an alpha, a beta and a gamma chain.

EIF-2 functions in the early steps of protein synthesis by forming a ternary complex with GTP and initiator tRNA. The polypeptide is Translation initiation factor 2 subunit alpha (Saccharolobus islandicus (strain M.16.27) (Sulfolobus islandicus)).